A 101-amino-acid polypeptide reads, in one-letter code: Small ribosomal subunit protein uS10 (101 aa).

The protein belongs to the universal ribosomal protein uS10 family. As to quaternary structure, part of the 30S ribosomal subunit.

In terms of biological role, involved in the binding of tRNA to the ribosomes. In Ureaplasma parvum serovar 3 (strain ATCC 27815 / 27 / NCTC 11736), this protein is Small ribosomal subunit protein uS10.